The primary structure comprises 456 residues: MGCFSCFDSSDDEKLNPVDESNHGQKKQSQPTVSNNISGLPSGGEKLSSKTNGGSKRELLLPRDGLGQIAAHTFAFRELAAATMNFHPDTFLGEGGFGRVYKGRLDSTGQVVAVKQLDRNGLQGNREFLVEVLMLSLLHHPNLVNLIGYCADGDQRLLVYEFMPLGSLEDHLHDLPPDKEALDWNMRMKIAAGAAKGLEFLHDKANPPVIYRDFKSSNILLDEGFHPKLSDFGLAKLGPTGDKSHVSTRVMGTYGYCAPEYAMTGQLTVKSDVYSFGVVFLELITGRKAIDSEMPHGEQNLVAWARPLFNDRRKFIKLADPRLKGRFPTRALYQALAVASMCIQEQAATRPLIADVVTALSYLANQAYDPSKDDSRRNRDERGARLITRNDDGGGSGSKFDLEGSEKEDSPRETARILNRDINRERAVAEAKMWGESLREKRRQSEQGTSESNSTG.

A disordered region spans residues 1 to 57; that stretch reads MGCFSCFDSSDDEKLNPVDESNHGQKKQSQPTVSNNISGLPSGGEKLSSKTNGGSKR. A lipid anchor (N-myristoyl glycine) is attached at Gly2. S-palmitoyl cysteine attachment occurs at residues Cys3 and Cys6. Positions 12-23 are enriched in basic and acidic residues; it reads DEKLNPVDESNH. A Phosphoserine modification is found at Ser21. Residues 27-39 are compositionally biased toward polar residues; it reads KQSQPTVSNNISG. One can recognise a Protein kinase domain in the interval 86–363; the sequence is FHPDTFLGEG…ADVVTALSYL (278 aa). ATP is bound by residues 92 to 100 and Lys115; that span reads LGEGGFGRV. Tyr160 carries the post-translational modification Phosphotyrosine. The Proton acceptor role is filled by Asp213. Phosphoserine occurs at positions 217 and 247. A phosphothreonine mark is found at Thr248 and Thr253. Phosphotyrosine is present on Tyr261. Positions 292 to 296 match the Recognition motif required for RPS5-mediated plant resistance to P.syringae motif; sequence SEMPH. The segment at 368–456 is disordered; sequence YDPSKDDSRR…QGTSESNSTG (89 aa). Composition is skewed to basic and acidic residues over residues 370-392 and 400-429; these read PSKD…RNDD and FDLE…RAVA. Polar residues predominate over residues 446-456; it reads EQGTSESNSTG.

The protein belongs to the protein kinase superfamily. Ser/Thr protein kinase family. In terms of assembly, in infected plant cells, it interacts with the P.syringae virulence protein avrPphB. In uninfected plants, autophosphorylated form interacts with RPS5. Interacts with FLS2. In terms of processing, cleaved by avrPphB in infected plant cells. Its cleavage serves as a signal that triggers the RPS5-mediated defense system. Post-translationally, autophosphorylates. Autophosphorylation may be required to trigger the RPS5-mediated plant defense system. Palmitoylation at Cys-3 and Cys-6 are required for plasma membrane location that is essential for the RPS5-mediated plant defense response.

Its subcellular location is the cell membrane. The catalysed reaction is L-seryl-[protein] + ATP = O-phospho-L-seryl-[protein] + ADP + H(+). The enzyme catalyses L-threonyl-[protein] + ATP = O-phospho-L-threonyl-[protein] + ADP + H(+). Protein kinase required for plant defense mechanism mediated by the disease resistance (R) protein RPS5. In case of infection by Pseudomonas syringae, AvrPphB triggers RPS5-mediated defense mechanism via the cleavage of PBS1. Both kinase activity and cleavage by avrPphB are independently required to trigger the RPS5-mediated resistance. Contributes to PAMP-triggered immunity (PTI) signaling and defense responses downstream of FLS2. This is Serine/threonine-protein kinase PBS1 from Arabidopsis thaliana (Mouse-ear cress).